A 217-amino-acid chain; its full sequence is ATP-dependent Clp protease proteolytic subunit (217 aa).

Residue serine 121 is the Nucleophile of the active site. Histidine 146 is a catalytic residue.

Belongs to the peptidase S14 family. In terms of assembly, fourteen ClpP subunits assemble into 2 heptameric rings which stack back to back to give a disk-like structure with a central cavity, resembling the structure of eukaryotic proteasomes.

It localises to the cytoplasm. It catalyses the reaction Hydrolysis of proteins to small peptides in the presence of ATP and magnesium. alpha-casein is the usual test substrate. In the absence of ATP, only oligopeptides shorter than five residues are hydrolyzed (such as succinyl-Leu-Tyr-|-NHMec, and Leu-Tyr-Leu-|-Tyr-Trp, in which cleavage of the -Tyr-|-Leu- and -Tyr-|-Trp bonds also occurs).. Its function is as follows. Cleaves peptides in various proteins in a process that requires ATP hydrolysis. Has a chymotrypsin-like activity. Plays a major role in the degradation of misfolded proteins. This Burkholderia cenocepacia (strain HI2424) protein is ATP-dependent Clp protease proteolytic subunit.